Consider the following 132-residue polypeptide: CLAVATA3/ESR (CLE)-related protein ESR2 (132 aa).

The N-terminal stretch at 1–26 (MASRMGMVAIVSLFVCALVASTSVNA) is a signal peptide. Positions 68 to 132 (NRASKQLDSE…IGPPPFLDRY (65 aa)) are disordered. A hydroxyproline mark is found at P82 and P85. O-linked (Ara...) hydroxyproline glycosylation occurs at P85. Positions 123-132 (IGPPPFLDRY) are enriched in pro residues.

This sequence belongs to the CLV3/ESR signal peptide family. The O-glycosylation (arabinosylation) of the hydroxyproline Pro-85 enhances binding affinity of the ESR2p peptide for its receptor. As to expression, seed endosperm.

The protein localises to the secreted. It localises to the extracellular space. In terms of biological role, extracellular signal peptide that regulates cell fate. The polypeptide is CLAVATA3/ESR (CLE)-related protein ESR2 (Zea mays (Maize)).